Consider the following 254-residue polypeptide: NAD-dependent protein deacylase (254 aa).

One can recognise a Deacetylase sirtuin-type domain in the interval 1 to 250 (MERLEEARKR…LPPSPEDQAE (250 aa)). Residue 22 to 41 (GAGISKPSGIPTFRDAEGLW) participates in NAD(+) binding. Substrate-binding residues include Tyr-66 and Arg-69. Position 104–107 (104–107 (QNVD)) interacts with NAD(+). His-122 serves as the catalytic Proton acceptor. Zn(2+) contacts are provided by Cys-130, Cys-133, Cys-149, and Cys-152. NAD(+)-binding positions include 189–191 (GTS), 215–217 (NPE), and Ala-233.

The protein belongs to the sirtuin family. Class III subfamily. Zn(2+) serves as cofactor.

The protein localises to the cytoplasm. The enzyme catalyses N(6)-acetyl-L-lysyl-[protein] + NAD(+) + H2O = 2''-O-acetyl-ADP-D-ribose + nicotinamide + L-lysyl-[protein]. It carries out the reaction N(6)-succinyl-L-lysyl-[protein] + NAD(+) + H2O = 2''-O-succinyl-ADP-D-ribose + nicotinamide + L-lysyl-[protein]. Its function is as follows. NAD-dependent lysine deacetylase and desuccinylase that specifically removes acetyl and succinyl groups on target proteins. Modulates the activities of several proteins which are inactive in their acylated form. This Thermus thermophilus (strain ATCC BAA-163 / DSM 7039 / HB27) protein is NAD-dependent protein deacylase.